The chain runs to 420 residues: Histidine--tRNA ligase (420 aa).

Belongs to the class-II aminoacyl-tRNA synthetase family. As to quaternary structure, homodimer.

The protein localises to the cytoplasm. It carries out the reaction tRNA(His) + L-histidine + ATP = L-histidyl-tRNA(His) + AMP + diphosphate + H(+). The polypeptide is Histidine--tRNA ligase (hisS) (Thermotoga maritima (strain ATCC 43589 / DSM 3109 / JCM 10099 / NBRC 100826 / MSB8)).